A 325-amino-acid polypeptide reads, in one-letter code: Tartrate-resistant acid phosphatase type 5 (325 aa).

The first 21 residues, 1–21, serve as a signal peptide directing secretion; it reads MDMWTALLILQALLLPSLADG. Fe cation is bound by residues Asp-33, Asp-71, Tyr-74, and Asn-110. 2 N-linked (GlcNAc...) asparagine glycosylation sites follow: Asn-116 and Asn-147. Cysteines 161 and 219 form a disulfide. Fe cation-binding residues include His-205, His-240, and His-242.

The protein belongs to the metallophosphoesterase superfamily. Purple acid phosphatase family. In terms of assembly, exists either as monomer or, after proteolytic processing, as a dimer of two chains linked by disulfide bond(s). Fe cation is required as a cofactor.

The protein localises to the lysosome. It carries out the reaction a phosphate monoester + H2O = an alcohol + phosphate. Involved in osteopontin/bone sialoprotein dephosphorylation. Its expression seems to increase in certain pathological states such as Gaucher and Hodgkin diseases, the hairy cell, the B-cell, and the T-cell leukemias. In Homo sapiens (Human), this protein is Tartrate-resistant acid phosphatase type 5 (ACP5).